The sequence spans 453 residues: MQARALLLAALAALALAREPPAAPCPARCDVSRCPSPRCPGGYVPDLCNCCLVCAASEGEPCGGPLDSPCGESLECVRGLCRCRWSHAVCGTDGHTYANVCALQAASRRALQLSGTPVRQLQKGACPLGLHQLSSPRYKFNFIADVVEKIAPAVVHIELFLRHPLFGRNVPLSSGSGFIMSEAGLIITNAHVVSSNSAAPGRQQLKVQLQNGDSYEATIKDIDKKSDIATIKIHPKKKLPVLLLGHSADLRPGEFVVAIGSPFALQNTVTTGIVSTAQREGRELGLRDSDMDYIQTDAIINYGNSGGPLVNLDGEVIGINTLKVTAGISFAIPSDRITRFLTEFQDKQIKDWKKRFIGIRMRTITPSLVDELKASNPDFPEVSSGIYVQEVAPNSPSQRGGIQDGDIIVKVNGRPLVDSSELQEAVLTESPLLLEVRRGNDDLLFSIAPEVVM.

The first 17 residues, 1–17, serve as a signal peptide directing secretion; the sequence is MQARALLLAALAALALA. In terms of domain architecture, IGFBP N-terminal spans 21-84; sequence PAAPCPARCD…ECVRGLCRCR (64 aa). Cystine bridges form between Cys-25–Cys-48, Cys-29–Cys-50, Cys-34–Cys-51, Cys-39–Cys-54, Cys-62–Cys-76, Cys-70–Cys-81, Cys-83–Cys-101, and Cys-90–Cys-126. Residues 64–128 form the Kazal-like domain; it reads GPLDSPCGES…RQLQKGACPL (65 aa). The serine protease stretch occupies residues 175 to 340; it reads GSGFIMSEAG…AIPSDRITRF (166 aa). Residues His-191, Asp-227, and Ser-305 each act as charge relay system in the active site. The region spanning 359-444 is the PDZ domain; sequence IRMRTITPSL…EVRRGNDDLL (86 aa).

The protein belongs to the peptidase S1C family. As to quaternary structure, homotrimer. Interacts with TGFB1; the interaction inhibits TGFB-mediated signaling. Interacts with BMP4; the interaction inhibits BMP4-mediated signaling. Interacts with TGFB2 and GDF5. Interacts with MYH9. In terms of tissue distribution, widely expressed, with highest levels in both adult and fetal heart, ovary, uterus placenta, and bladder. In the endometrium, expressed in epithelial glands and the stroma. Also present in leukocytes. Isoform 1 is predominant in heart and skeletal muscle, whereas isoform 2 is predominant in placenta and kidney.

The protein resides in the secreted. In terms of biological role, serine protease that cleaves beta-casein/CSN2 as well as several extracellular matrix (ECM) proteoglycans such as decorin/DCN, biglycan/BGN and fibronectin/FN1. Inhibits signaling mediated by TGF-beta family proteins possibly indirectly by degradation of these ECM proteoglycans. May act as a tumor suppressor. Negatively regulates, in vitro, trophoblast invasion during placental development and may be involved in the development of the placenta in vivo. May also have a role in ovarian development, granulosa cell differentiation and luteinization. The polypeptide is Serine protease HTRA3 (HTRA3) (Homo sapiens (Human)).